Here is a 474-residue protein sequence, read N- to C-terminus: Coiled-coil domain-containing protein 6 (474 aa).

A compositionally biased stretch (acidic residues) spans M1 to T10. The segment at M1–G47 is disordered. At A2 the chain carries N-acetylalanine. Positions N16 to T30 are enriched in low complexity. Over residues S31–G47 the composition is skewed to gly residues. S52 bears the Phosphoserine mark. A coiled-coil region spans residues P53 to Q237. Tandem repeats lie at residues E106–Y134, E135–L163, and E164–L192. The 5 X 29 AA tandem repeats stretch occupies residues E106–L235. The 4; approximate repeat unit spans residues E193–L206. Residues E207 to L235 form repeat 5. A phosphoserine mark is found at S240, S244, S249, S254, S284, and S323. A coiled-coil region spans residues D253 to D332. Positions A342–G369 are disordered. T349 bears the Phosphothreonine mark. Residues S351–P368 show a composition bias toward low complexity. Phosphoserine occurs at positions 363 and 367. Residue R387 is modified to Omega-N-methylarginine. Phosphoserine occurs at positions 395 and 413. The interval G397–P474 is disordered. Pro residues predominate over residues P426–P451. Residues P442–P451 carry the SH3-binding motif. The segment covering S459–P474 has biased composition (low complexity).

As to expression, ubiquitously expressed.

Its subcellular location is the cytoplasm. The protein localises to the cytoskeleton. The protein is Coiled-coil domain-containing protein 6 (CCDC6) of Homo sapiens (Human).